A 458-amino-acid polypeptide reads, in one-letter code: Probable M18 family aminopeptidase 1 (458 aa).

3 residues coordinate Zn(2+): H95, H170, and H434.

This sequence belongs to the peptidase M18 family. Zn(2+) serves as cofactor.

The protein is Probable M18 family aminopeptidase 1 of Borrelia garinii subsp. bavariensis (strain ATCC BAA-2496 / DSM 23469 / PBi) (Borreliella bavariensis).